Here is a 420-residue protein sequence, read N- to C-terminus: MVKAIRKLSLIQKIMIGIVIGTTLGFLVPEWTFISVLGELFVGALKAIAPILVFVLIIASLAQQKAGAKTYVGSILVVYLLATFLAAVVAVTASYLFPVKIVLEAAQEAQAAPTQLSDVLSNVLTSVVQNPIQAMIEGNYLSVLFWSSLIGIGLRQSSVATKDVIANLSTGITTVVQMIIGIAPIGILGLVFHSVATTGIAGLAKYGQLLLLLIGTMAVVALVVYPAIVFWNIRQNPYPLVFFVLKESAIPAFFTRSSAANIPINMELAKAMDLNEESYAVSIPLGATINMGGAAITITIMTLAAVHTLGMSVPIYLALLLSIIAAVSACGASGIAGGSLLLIPLACSLFGISNDIAMQVVGVGFIVGVVQDSIETALNSSSDLLFTTSVELADRRKNGEIIDVKALIGKSQLVVEQENI.

9 helical membrane passes run 14 to 34 (IMIG…WTFI), 40 to 60 (LFVG…IIAS), 71 to 91 (YVGS…VVAV), 172 to 192 (ITTV…GLVF), 210 to 230 (LLLL…AIVF), 283 to 303 (IPLG…IMTL), 309 to 329 (LGMS…AVSA), 332 to 352 (ASGI…LFGI), and 356 to 376 (IAMQ…SIET).

Belongs to the dicarboxylate/amino acid:cation symporter (DAACS) (TC 2.A.23) family.

It is found in the cell membrane. It carries out the reaction L-serine(in) + Na(+)(in) = L-serine(out) + Na(+)(out). The catalysed reaction is L-threonine(in) + Na(+)(in) = L-threonine(out) + Na(+)(out). Functionally, involved in the import of serine and threonine into the cell, with the concomitant import of sodium (symport system). The chain is Serine/threonine transporter SstT from Enterococcus faecalis (strain ATCC 700802 / V583).